A 115-amino-acid polypeptide reads, in one-letter code: Small polypeptide DEVIL 13 (115 aa).

The span at 1–12 (MEEKWKLSKKDT) shows a compositional bias: basic and acidic residues. The segment at 1-89 (MEEKWKLSKK…SITQKYSSLA (89 aa)) is disordered. Positions 13–65 (TASSSSSKSKFSRSFSTSASSTKSPIFVRSSSTKCSVPSSSSSSSSSSSISRS) are enriched in low complexity. A helical transmembrane segment spans residues 44 to 63 (STKCSVPSSSSSSSSSSSIS). The interval 80–111 (SITQKYSSLAKEQKARFYIMRRCVAMLVCWHK) is required for DVL/RTFL small polypeptide activity.

Belongs to the DVL/RTFL small polypeptides family.

Its subcellular location is the cell membrane. In terms of biological role, small polypeptide acting as a regulatory molecule which coordinates cellular responses required for differentiation, growth and development, probably by restricting polar cell proliferation in lateral organs and coordinating socket cell recruitment and differentiation at trichome sites. This is Small polypeptide DEVIL 13 from Arabidopsis thaliana (Mouse-ear cress).